Here is a 744-residue protein sequence, read N- to C-terminus: Endonuclease MutS2 (744 aa).

315–322 (GPNMGGKT) serves as a coordination point for ATP. Residues 668-743 (VDLRGLTVAE…GHGVTVVALR (76 aa)) enclose the Smr domain.

It belongs to the DNA mismatch repair MutS family. MutS2 subfamily. In terms of assembly, homodimer. Interacts with MutL. Binds to stalled ribosomes, contacting rRNA.

Nuclease activity is stimulated by interaction with MutL. ATPase activity is stimulated by dsDNA. Its function is as follows. Endonuclease that is involved in the suppression of homologous recombination and may thus have a key role in the control of bacterial genetic diversity. Cleaves the phosphate backbone of oligodeoxynucleotides non-sequence-specifically at the 3' side of the phosphates. Preferably incises the branched DNA structures, especially the D-loop structure over the Holliday junction. Has ATPase activity. Binds to dsDNA but not to ssDNA. Functionally, acts as a ribosome collision sensor, splitting the ribosome into its 2 subunits. Detects stalled/collided 70S ribosomes which it binds and splits by an ATP-hydrolysis driven conformational change. Acts upstream of the ribosome quality control system (RQC), a ribosome-associated complex that mediates the extraction of incompletely synthesized nascent chains from stalled ribosomes and their subsequent degradation. Probably generates substrates for RQC. The polypeptide is Endonuclease MutS2 (Thermus thermophilus (strain ATCC 27634 / DSM 579 / HB8)).